The chain runs to 735 residues: Two pore calcium channel protein 1B (735 aa).

The Cytoplasmic segment spans residues 1-76; that stretch reads MEEYLLPGES…ELYFMFTRFD (76 aa). Residues 77-97 form a helical membrane-spanning segment; it reads FLWSLNYLALVVLNFFEKPLW. Residues 98–125 are Extracellular-facing; that stretch reads CSKHLAESCNNRDYYYLGELPFLTGAES. Residues 126-146 form a helical membrane-spanning segment; that stretch reads LIFEGVTLLLLIIHILFPISY. Topologically, residues 147-161 are cytoplasmic; the sequence is EGFNLYWRSLLNRLK. The chain crosses the membrane as a helical span at residues 162–182; sequence VILLLILVADIVVYILLPADF. Position 183 (tyrosine 183) is a topological domain, extracellular. A helical; Voltage-sensor membrane pass occupies residues 184-202; sequence YLPFRIAPYLRVVFFILNI. Residues 203–208 are Cytoplasmic-facing; sequence RELRDS. Residues 209-229 traverse the membrane as a helical segment; that stretch reads FFILAGMLGTYLNVVALSALF. The Extracellular segment spans residues 230-248; sequence LLFSSWLAYVFFEDTRQGK. The pore-forming intramembrane region spans 249-263; sequence TTFTSYGTTLYQMFV. Over 264 to 286 the chain is Extracellular; that stretch reads LFTTSNNPDVWIPAYKDSRWYCL. A helical transmembrane segment spans residues 287–307; it reads FFVLYVLLGVYFVTNLILAVV. The Cytoplasmic portion of the chain corresponds to 308-431; it reads YDSFKSELVK…ASEKLRGFIR (124 aa). EF-hand domains follow at residues 325–360 and 366–401; these read LRLRTLKKAFSLIDEANNGLLNEKQCTLLFEELNKY and ISGDDFKSIFNELDDTGDFKINLEEFADLCSAIGLR. The helical transmembrane segment at 432–452 threads the bilayer; the sequence is GATFEYIIVFVLLVNLVAVII. The Extracellular segment spans residues 453–470; that stretch reads ETTLDIQNNSGQTFWQKV. N-linked (GlcNAc...) asparagine glycosylation is present at asparagine 460. The helical transmembrane segment at 471 to 491 threads the bilayer; the sequence is EFTFGWLYVIEMALKVYTYGF. The Cytoplasmic segment spans residues 492-501; it reads ENYWRDGQNR. A helical transmembrane segment spans residues 502–522; that stretch reads FDFIVTWVIVIGETTTFVAPD. Residues 523–531 lie on the Extracellular side of the membrane; it reads DLTFLSNGE. Residues 532-549 traverse the membrane as a helical; Voltage-sensor segment; it reads WIRYLLIARMLRLIRLLM. Residues 550–560 are Cytoplasmic-facing; it reads HVERYRAFVAT. Residues 561–581 traverse the membrane as a helical segment; it reads FLTLIPSLMPYLGTIFCILCF. Topologically, residues 582-618 are extracellular; it reads YCSLGLQIFGGIVNTGNPNLAQTDLAGNDYLLFNFND. Positions 619–633 form an intramembrane region, pore-forming; it reads YPNGMVTLFNILVMG. At 634-654 the chain is on the extracellular side; the sequence is NWQVWMQSYKELTGTSWTYAY. Residues 655–675 traverse the membrane as a helical segment; that stretch reads FVSFYLISVLWLLNLIVAFVL. The Cytoplasmic segment spans residues 676-735; it reads EAFQAEMDLEASARCVDGDDKEAKRERRRNVGTKTRSQRVDFLLHHMLRSELTECSNDNP.

The protein belongs to the calcium channel alpha-1 subunit (TC 1.A.1.11) family. Two pore calcium channel subfamily. In terms of assembly, homodimer.

The protein resides in the membrane. Inhibited by Al(3+), La(3+) and Gd(3+). Up-regulated by H(2)O(2), cryptogein, salicylic acid (SA) and cold shock. In terms of biological role, functions as a voltage-gated inward-rectifying Ca(2+) channel (VDCC) across the plasma membrane that mediates sucrose-induced Ca(2+) influx in autotrophically grown leaf cells. Acts as the major ROS-responsive Ca(2+) channel and is the possible target of Al-dependent inhibition. Plays a regulatory role in defense responses. The protein is Two pore calcium channel protein 1B (TPC1B) of Nicotiana tabacum (Common tobacco).